We begin with the raw amino-acid sequence, 382 residues long: Alanine racemase 1 (382 aa).

The active-site Proton acceptor; specific for D-alanine is Lys-39. Residue Lys-39 is modified to N6-(pyridoxal phosphate)lysine. Position 138 (Arg-138) interacts with substrate. Tyr-265 acts as the Proton acceptor; specific for L-alanine in catalysis. Residue Met-312 coordinates substrate.

The protein belongs to the alanine racemase family. Pyridoxal 5'-phosphate is required as a cofactor.

It carries out the reaction L-alanine = D-alanine. It functions in the pathway amino-acid biosynthesis; D-alanine biosynthesis; D-alanine from L-alanine: step 1/1. Catalyzes the interconversion of L-alanine and D-alanine. May also act on other amino acids. This is Alanine racemase 1 (alr1) from Staphylococcus aureus (strain NCTC 8325 / PS 47).